Reading from the N-terminus, the 539-residue chain is Glycerophosphoinositol inositolphosphodiesterase GDPD2 (539 aa).

The Cytoplasmic segment spans residues 1–38; it reads MAESPGCCSVWARCLHCLYSCHWRKCPRERMQTSKCDC. Residues 39 to 59 form a helical membrane-spanning segment; the sequence is IWFGLLFLTFLLSLSWLYIGL. Topologically, residues 60–85 are extracellular; the sequence is VLLNDLHNFNEFLFRRWGHWMDWSLA. The chain crosses the membrane as a helical span at residues 86–106; that stretch reads FLLVISLLVTYASLLLVLALL. Residues 107–121 are Cytoplasmic-facing; sequence LRLCRQPLHLHSLHK. Residues 122 to 142 form a helical membrane-spanning segment; it reads VLLLLIMLLVAAGLVGLDIQW. At 143 to 154 the chain is on the extracellular side; that stretch reads QQEWHSLRVSLQ. Residues 155–175 traverse the membrane as a helical segment; it reads ATAPFLHIGAAAGIALLAWPV. At 176-188 the chain is on the cytoplasmic side; the sequence is ADTFYRIHRRGPK. A helical transmembrane segment spans residues 189–209; sequence ILLLLLFFGVVLVIYLAPLCI. Topologically, residues 210 to 490 are extracellular; sequence SSPCIMEPRD…PIWLITPQTY (281 aa). Residues 224-479 enclose the GP-PDE domain; that stretch reads PGLVGHRGAP…NDCQLLQQMR (256 aa). Glutamate 256, aspartate 258, and histidine 271 together coordinate a divalent metal cation. Asparagine 442 carries N-linked (GlcNAc...) asparagine glycosylation. The chain crosses the membrane as a helical span at residues 491–511; it reads LIIWVITNCVSTMLLLWTFLL. The Cytoplasmic segment spans residues 512–539; that stretch reads QRRFVKKRGKTGLETAVLLTRINNFMME.

It belongs to the glycerophosphoryl diester phosphodiesterase family. The cofactor is Ca(2+).

It localises to the cell membrane. Its subcellular location is the cytoplasm. It is found in the cytoskeleton. The enzyme catalyses sn-glycero-3-phospho-1D-myo-inositol + H2O = 1D-myo-inositol 1-phosphate + glycerol + H(+). Its function is as follows. Has glycerophosphoinositol inositolphosphodiesterase activity and specifically hydrolyzes glycerophosphoinositol, with no activity for other substrates such as glycerophosphoinositol 4-phosphate, glycerophosphocholine, glycerophosphoethanolamine, and glycerophosphoserine. Accelerates the program of osteoblast differentiation and growth. May play a role in remodeling of the actin cytoskeleton. The chain is Glycerophosphoinositol inositolphosphodiesterase GDPD2 (GDPD2) from Homo sapiens (Human).